The following is a 166-amino-acid chain: NAD(P)H-quinone oxidoreductase subunit I, chloroplastic (166 aa).

4Fe-4S ferredoxin-type domains lie at 55-84 (GRIHFEFDKCIACEVCVRVCPIDLPVVDWK) and 95-124 (LNYSIDFGICIFCGNCVEYCPTNCLSMTEE). [4Fe-4S] cluster-binding residues include C64, C67, C70, C74, C104, C107, C110, and C114.

Belongs to the complex I 23 kDa subunit family. In terms of assembly, NDH is composed of at least 16 different subunits, 5 of which are encoded in the nucleus. The cofactor is [4Fe-4S] cluster.

It is found in the plastid. The protein localises to the chloroplast thylakoid membrane. The enzyme catalyses a plastoquinone + NADH + (n+1) H(+)(in) = a plastoquinol + NAD(+) + n H(+)(out). It catalyses the reaction a plastoquinone + NADPH + (n+1) H(+)(in) = a plastoquinol + NADP(+) + n H(+)(out). In terms of biological role, NDH shuttles electrons from NAD(P)H:plastoquinone, via FMN and iron-sulfur (Fe-S) centers, to quinones in the photosynthetic chain and possibly in a chloroplast respiratory chain. The immediate electron acceptor for the enzyme in this species is believed to be plastoquinone. Couples the redox reaction to proton translocation, and thus conserves the redox energy in a proton gradient. This Acanthospermum australe (Paraguayan starburr) protein is NAD(P)H-quinone oxidoreductase subunit I, chloroplastic.